Here is a 226-residue protein sequence, read N- to C-terminus: Thymidylate kinase (226 aa).

20–27 (GGEGAGKS) is a binding site for ATP.

The protein belongs to the thymidylate kinase family.

It carries out the reaction dTMP + ATP = dTDP + ADP. In terms of biological role, phosphorylation of dTMP to form dTDP in both de novo and salvage pathways of dTTP synthesis. This Bradyrhizobium sp. (strain BTAi1 / ATCC BAA-1182) protein is Thymidylate kinase.